Here is a 104-residue protein sequence, read N- to C-terminus: MQIDKLRGKELDQLFNSILSLKDLEECYRFFDDLCTINEIQSLAQRLEVARMLREGNTYHKIETETGASTATISRVKRCLNYGNDAYEMALDRVKETETESSSK.

This is an uncharacterized protein from Bacillus subtilis (strain 168).